A 231-amino-acid chain; its full sequence is U1 small nuclear ribonucleoprotein C-1 (231 aa).

The Matrin-type zinc-finger motif lies at tyrosine 4 to threonine 36. Pro residues-rich tracts occupy residues alanine 117–proline 127, glycine 134–serine 159, and leucine 167–serine 178. Positions alanine 117–histidine 231 are disordered. The span at proline 181–alanine 193 shows a compositional bias: low complexity. The segment covering proline 199–proline 217 has biased composition (pro residues).

The protein belongs to the U1 small nuclear ribonucleoprotein C family. U1 snRNP is composed of the 7 core Sm proteins B/B', D1, D2, D3, E, F and G that assemble in a heptameric protein ring on the Sm site of the small nuclear RNA to form the core snRNP, and at least 3 U1 snRNP-specific proteins U1-70K, U1-A and U1-C. U1-C interacts with U1 snRNA and the 5' splice-site region of the pre-mRNA.

It is found in the nucleus. Its function is as follows. Component of the spliceosomal U1 snRNP, which is essential for recognition of the pre-mRNA 5' splice-site and the subsequent assembly of the spliceosome. U1-C is directly involved in initial 5' splice-site recognition for both constitutive and regulated alternative splicing. The interaction with the 5' splice-site seems to precede base-pairing between the pre-mRNA and the U1 snRNA. Stimulates commitment or early (E) complex formation by stabilizing the base pairing of the 5' end of the U1 snRNA and the 5' splice-site region. This is U1 small nuclear ribonucleoprotein C-1 from Sorghum bicolor (Sorghum).